Here is a 330-residue protein sequence, read N- to C-terminus: 5'-AMP-activated protein kinase subunit gamma-1 (330 aa).

The disordered stretch occupies residues 1–21; sequence MESVAAESSPALENEHFQETP. CBS domains are found at residues 42 to 102, 124 to 186, and 197 to 259; these read PTSS…KSAL, SFKP…PKPE, and IGTY…NLDV. Residues arginine 69, 84–89, valine 129, 150–151, and lysine 169 each bind ADP; these read MLTITD and HR. AMP is bound by residues arginine 69, 84–89, valine 129, histidine 150, 150–151, lysine 169, threonine 199, alanine 204, 225–226, and 241–244; these read MLTITD, HR, SA, and SKFD. Residues arginine 69, 84–89, valine 129, 150–151, arginine 151, and lysine 169 contribute to the ATP site; these read MLTITD and HR. Positions 137-158 match the AMPK pseudosubstrate motif; sequence LFDAVSSLIRNKIHRLPVIDPE. 241 to 244 provides a ligand contact to ADP; that stretch reads SKFD. 241–244 provides a ligand contact to ATP; it reads SKFD. The residue at position 260 (serine 260) is a Phosphoserine; by ULK1. Threonine 262 carries the post-translational modification Phosphothreonine; by ULK1. Arginine 268 is an ADP binding site. Arginine 268 provides a ligand contact to AMP. An ATP-binding site is contributed by arginine 268. Residue serine 269 is modified to Phosphoserine; by ULK1. In terms of domain architecture, CBS 4 spans 271-328; that stretch reads YFEGVLKCYLHETLETIINRLVEAEVHRLVVVDEHDVVKGIVSLSDILQALVLTGGEK. ADP is bound by residues leucine 276 and 297–298; that span reads HR. Residues leucine 276, histidine 297, 297–298, and 313–316 each bind AMP; these read HR and SLSD. Residues leucine 276 and 297–298 each bind ATP; that span reads HR.

It belongs to the 5'-AMP-activated protein kinase gamma subunit family. In terms of assembly, AMPK is a heterotrimer of an alpha catalytic subunit (PRKAA1 or PRKAA2), a beta (PRKAB1 or PRKAB2) and a gamma non-catalytic subunits (PRKAG1, PRKAG2 or PRKAG3). Interacts with FNIP1 and FNIP2. Post-translationally, phosphorylated by ULK1 and ULK2; leading to negatively regulate AMPK activity and suggesting the existence of a regulatory feedback loop between ULK1, ULK2 and AMPK. Glycosylated; O-GlcNAcylated by OGT, promoting the AMP-activated protein kinase (AMPK) activity.

Functionally, AMP/ATP-binding subunit of AMP-activated protein kinase (AMPK), an energy sensor protein kinase that plays a key role in regulating cellular energy metabolism. In response to reduction of intracellular ATP levels, AMPK activates energy-producing pathways and inhibits energy-consuming processes: inhibits protein, carbohydrate and lipid biosynthesis, as well as cell growth and proliferation. AMPK acts via direct phosphorylation of metabolic enzymes, and by longer-term effects via phosphorylation of transcription regulators. Also acts as a regulator of cellular polarity by remodeling the actin cytoskeleton; probably by indirectly activating myosin. Gamma non-catalytic subunit mediates binding to AMP, ADP and ATP, leading to activate or inhibit AMPK: AMP-binding results in allosteric activation of alpha catalytic subunit (PRKAA1 or PRKAA2) both by inducing phosphorylation and preventing dephosphorylation of catalytic subunits. ADP also stimulates phosphorylation, without stimulating already phosphorylated catalytic subunit. ATP promotes dephosphorylation of catalytic subunit, rendering the AMPK enzyme inactive. The sequence is that of 5'-AMP-activated protein kinase subunit gamma-1 (Prkag1) from Mus musculus (Mouse).